Consider the following 89-residue polypeptide: Acylphosphatase (89 aa).

In terms of domain architecture, Acylphosphatase-like spans 4–89 (SRRFLVSGTV…EQPPEGFRVL (86 aa)). Active-site residues include Arg-19 and Asn-37.

Belongs to the acylphosphatase family.

The catalysed reaction is an acyl phosphate + H2O = a carboxylate + phosphate + H(+). This is Acylphosphatase (acyP) from Alkalilimnicola ehrlichii (strain ATCC BAA-1101 / DSM 17681 / MLHE-1).